Consider the following 485-residue polypeptide: Skb1 localization factor 1 (485 aa).

The sufficient for interaction with Skb1 stretch occupies residues 1–200; it reads MSSIIQNPIE…VDDSDLTPHT (200 aa). 3 disordered regions span residues 117–230, 286–416, and 446–466; these read NAAN…MSRN, ETQH…LRRS, and TTQE…KPEK. The span at 171-182 shows a compositional bias: polar residues; the sequence is SRSSRYSKTSDL. Over residues 189-198 the composition is skewed to basic and acidic residues; that stretch reads RFVDDSDLTP. Polar residues-rich tracts occupy residues 218 to 230 and 341 to 363; these read GRSS…MSRN and VGSS…QQDS. Ser222 carries the phosphoserine modification. Residues 371-393 are compositionally biased toward basic and acidic residues; the sequence is SERSYRRVRDQYLSKPRLSDKNR. Polar residues predominate over residues 394–416; it reads YSTFSEFPGQGTPSASQSNLRRS. Positions 447–464 are enriched in basic and acidic residues; it reads TQERKPVVKPDSIKTVKP. Positions 451–485 are required and sufficient for plasma membrane anchoring; lysine-rich, may bind to anionic lipids in the plasma membrane; it reads KPVVKPDSIKTVKPEKKKSKGFFKKLMHKISHIFD. Residue Ser458 is modified to Phosphoserine.

As to quaternary structure, interacts with Skb1.

The protein resides in the cell membrane. In terms of biological role, acts as a membrane anchor for Skb1 in forming plasma membrane microdomains. Promotes mitotic entry by sequestering mitotic inhibitor Skb1 from its regulatory targets Cdr1 and Wee1. The polypeptide is Skb1 localization factor 1 (Schizosaccharomyces pombe (strain 972 / ATCC 24843) (Fission yeast)).